A 490-amino-acid chain; its full sequence is Probable cytosol aminopeptidase (490 aa).

Residues lysine 257 and aspartate 262 each coordinate Mn(2+). Lysine 269 is a catalytic residue. 3 residues coordinate Mn(2+): aspartate 281, aspartate 341, and glutamate 343. Residue arginine 345 is part of the active site.

It belongs to the peptidase M17 family. The cofactor is Mn(2+).

It is found in the cytoplasm. The catalysed reaction is Release of an N-terminal amino acid, Xaa-|-Yaa-, in which Xaa is preferably Leu, but may be other amino acids including Pro although not Arg or Lys, and Yaa may be Pro. Amino acid amides and methyl esters are also readily hydrolyzed, but rates on arylamides are exceedingly low.. It catalyses the reaction Release of an N-terminal amino acid, preferentially leucine, but not glutamic or aspartic acids.. Presumably involved in the processing and regular turnover of intracellular proteins. Catalyzes the removal of unsubstituted N-terminal amino acids from various peptides. This Prochlorococcus marinus (strain MIT 9312) protein is Probable cytosol aminopeptidase.